We begin with the raw amino-acid sequence, 218 residues long: Uridine kinase (218 aa).

Gly16 to Thr23 contacts ATP.

It belongs to the uridine kinase family.

The protein resides in the cytoplasm. The enzyme catalyses uridine + ATP = UMP + ADP + H(+). It carries out the reaction cytidine + ATP = CMP + ADP + H(+). It functions in the pathway pyrimidine metabolism; CTP biosynthesis via salvage pathway; CTP from cytidine: step 1/3. Its pathway is pyrimidine metabolism; UMP biosynthesis via salvage pathway; UMP from uridine: step 1/1. In Limosilactobacillus reuteri (strain DSM 20016) (Lactobacillus reuteri), this protein is Uridine kinase.